A 319-amino-acid polypeptide reads, in one-letter code: 4-hydroxy-3-methylbut-2-enyl diphosphate reductase (319 aa).

C18 contacts [4Fe-4S] cluster. 2 residues coordinate (2E)-4-hydroxy-3-methylbut-2-enyl diphosphate: H47 and H81. H47 and H81 together coordinate dimethylallyl diphosphate. Residues H47 and H81 each contribute to the isopentenyl diphosphate site. C103 contributes to the [4Fe-4S] cluster binding site. H131 lines the (2E)-4-hydroxy-3-methylbut-2-enyl diphosphate pocket. H131 contributes to the dimethylallyl diphosphate binding site. H131 contacts isopentenyl diphosphate. The Proton donor role is filled by E133. (2E)-4-hydroxy-3-methylbut-2-enyl diphosphate is bound at residue T172. Residue C202 participates in [4Fe-4S] cluster binding. (2E)-4-hydroxy-3-methylbut-2-enyl diphosphate-binding residues include S230, S231, N232, and S275. S230, S231, N232, and S275 together coordinate dimethylallyl diphosphate. Residues S230, S231, N232, and S275 each coordinate isopentenyl diphosphate.

This sequence belongs to the IspH family. The cofactor is [4Fe-4S] cluster.

The enzyme catalyses isopentenyl diphosphate + 2 oxidized [2Fe-2S]-[ferredoxin] + H2O = (2E)-4-hydroxy-3-methylbut-2-enyl diphosphate + 2 reduced [2Fe-2S]-[ferredoxin] + 2 H(+). The catalysed reaction is dimethylallyl diphosphate + 2 oxidized [2Fe-2S]-[ferredoxin] + H2O = (2E)-4-hydroxy-3-methylbut-2-enyl diphosphate + 2 reduced [2Fe-2S]-[ferredoxin] + 2 H(+). It participates in isoprenoid biosynthesis; dimethylallyl diphosphate biosynthesis; dimethylallyl diphosphate from (2E)-4-hydroxy-3-methylbutenyl diphosphate: step 1/1. The protein operates within isoprenoid biosynthesis; isopentenyl diphosphate biosynthesis via DXP pathway; isopentenyl diphosphate from 1-deoxy-D-xylulose 5-phosphate: step 6/6. Functionally, catalyzes the conversion of 1-hydroxy-2-methyl-2-(E)-butenyl 4-diphosphate (HMBPP) into a mixture of isopentenyl diphosphate (IPP) and dimethylallyl diphosphate (DMAPP). Acts in the terminal step of the DOXP/MEP pathway for isoprenoid precursor biosynthesis. The chain is 4-hydroxy-3-methylbut-2-enyl diphosphate reductase from Beijerinckia indica subsp. indica (strain ATCC 9039 / DSM 1715 / NCIMB 8712).